Reading from the N-terminus, the 922-residue chain is Cell cycle and apoptosis regulator protein 2 (922 aa).

Positions 1–39 are disordered; the sequence is MSQFKRQRINPLPGGRNFSGAASTSLLGPPPGLLTPPVA. Threonine 35 carries the phosphothreonine modification. N6-acetyllysine; by KAT8 is present on lysine 112. Lysine 123 carries the post-translational modification N6-methyllysine. Serine 124 is subject to Phosphoserine. 4 disordered regions span residues 178-219, 280-307, 446-508, and 567-638; these read LNRF…KPRH, RIQVSSEKEAAPDTGAEPSPEDSDPTYS, KATE…EPAV, and VSPP…RGEA. Position 180 is an omega-N-methylarginine (arginine 180). Residues 188-200 show a composition bias toward basic and acidic residues; sequence GRLDQGRSDDYDS. Residue lysine 215 is modified to N6-acetyllysine; by KAT8. The segment covering 473–491 has biased composition (polar residues); that stretch reads QADTSKQNTETMEATTQQD. At threonine 483 the chain carries Phosphothreonine. Serine 568 carries the post-translational modification Phosphoserine. Over residues 571 to 601 the composition is skewed to basic and acidic residues; sequence EPEKEEAAKEDAVKEEEAVKEEAVKVSKDEV. Residues 573-596 adopt a coiled-coil conformation; it reads EKEEAAKEDAVKEEEAVKEEAVKV. Lysine 590 is covalently cross-linked (Glycyl lysine isopeptide (Lys-Gly) (interchain with G-Cter in SUMO2 and SUMO3); alternate). Lysine 590 participates in a covalent cross-link: Glycyl lysine isopeptide (Lys-Gly) (interchain with G-Cter in SUMO2); alternate. The segment at 609–669 is interaction with MCC; sequence ESDSPLKEDG…DEFAGAKLEE (61 aa). Phosphoserine is present on residues serine 612, serine 626, serine 674, serine 677, and serine 680. The residue at position 684 (tyrosine 684) is a Phosphotyrosine. 2 positions are modified to phosphoserine: serine 686 and serine 807. Residues 703-922 are interaction with NR1D1; that stretch reads DCLLAFVFFD…VEKEEPTPSN (220 aa). Residues 828–898 adopt a coiled-coil conformation; the sequence is LENKIHTLEL…QDFRRRLTPL (71 aa). Threonine 896 carries the phosphothreonine modification.

As to quaternary structure, component of the DBIRD complex. Interacts with ZNF326/ZIRD; the interaction is direct. Interacts (via N-terminus) with SIRT1, which inhibits the deacetylation of substrates. Interacts (via N-terminus) with SUV39H1; this interaction abolishes the interaction with SIRT1. Component of a nuclear receptor-mediated transcription complex composed of at least ZNF335, CCAR2 and EMSY; the complex stimulates the transcription of nuclear receptor target genes such as SOX9 and HOXA1. Within the complex interacts with EMSY and interacts with ZNF335 (via C-terminus). Components of this complex may associate with components of a histone methylation complex to form a complex at least composed of ZNF335, HCFC1, CCAR2, EMSY, MKI67, RBBP5, ASH2L and WDR5. Within this complex, interacts with ASH2L. Interacts with NR1D1. Interacts (via N-terminus) with ESR1 and ESR2. Interacts (via N-terminus) with HDAC3 (via C-terminus). Interacts with HDAC1 and MED2F. Interacts with MCC. Interacts (via N-terminus) with NR1H2 and NR1H3 in a ligand-independent manner. Interacts with CSNK2A1. Interacts (via N-terminus) with p53/TP53. Interacts (via N-terminus) with BRCA1 (via the BRCT domains). Interacts (via N-terminus) with CHEK2 (via protein kinase domain). Interacts with PSEM3. Interacts (via N-terminus) with PSIA3 and SENP1. The sumoylated form shows a preferential interaction with SIRT1 as compared to its unmodified form. Interacts with CECR2; may form part of the CERF-1 and/or CEF-5 ISWI chromatin remodeling complexes in embryonic stem cells. Acetylation at Lys-112 and Lys-215 by KAT8 prevents inhibitory binding to SIRT1 and increases its deacetylase activity. In terms of processing, genotoxic stress induces its sumoylation and sumoylation promotes the SIRT1-CCAR2 interaction which in turn inhibits SIRT1-mediated deacetylation of p53/TP53. Sumoylation leads to transcriptional activation of p53/TP53 by sequestering SIRT1 from p53/TP53. Desumoylated by SENP1.

The protein resides in the nucleus. It localises to the cytoplasm. The protein localises to the cytoskeleton. Its subcellular location is the spindle. Functionally, core component of the DBIRD complex, a multiprotein complex that acts at the interface between core mRNP particles and RNA polymerase II (RNAPII) and integrates transcript elongation with the regulation of alternative splicing: the DBIRD complex affects local transcript elongation rates and alternative splicing of a large set of exons embedded in (A + T)-rich DNA regions. Inhibits SIRT1 deacetylase activity leading to increasing levels of p53/TP53 acetylation and p53-mediated apoptosis. Inhibits SUV39H1 methyltransferase activity. Mediates ligand-dependent transcriptional activation by nuclear hormone receptors. Plays a critical role in maintaining genomic stability and cellular integrity following UV-induced genotoxic stress. Regulates the circadian expression of the core clock components NR1D1 and BMAL1. Enhances the transcriptional repressor activity of NR1D1 through stabilization of NR1D1 protein levels by preventing its ubiquitination and subsequent degradation. Represses the ligand-dependent transcriptional activation function of ESR2. Acts as a regulator of PCK1 expression and gluconeogenesis by a mechanism that involves, at least in part, both NR1D1 and SIRT1. Negatively regulates the deacetylase activity of HDAC3 and can alter its subcellular localization. Positively regulates the beta-catenin pathway (canonical Wnt signaling pathway) and is required for MCC-mediated repression of the beta-catenin pathway. Represses ligand-dependent transcriptional activation function of NR1H2 and NR1H3 and inhibits the interaction of SIRT1 with NR1H3. Plays an important role in tumor suppression through p53/TP53 regulation; stabilizes p53/TP53 by affecting its interaction with ubiquitin ligase MDM2. Represses the transcriptional activator activity of BRCA1. Inhibits SIRT1 in a CHEK2 and PSEM3-dependent manner and inhibits the activity of CHEK2 in vitro. The protein is Cell cycle and apoptosis regulator protein 2 (Ccar2) of Mus musculus (Mouse).